Consider the following 281-residue polypeptide: MESRKISVLIADDNKEFCNILNDYLLNQSDMIVVGIAKDGVEALKLIENKKPDLVVLDIIMPRLDGLGVLEKLNNKDAENLPRIIVLSAVGQDKITQRAITLGADYYVVKPFDMDVFTNRIREMFNNTISNSEQKRSYQVEEKEASFAGTIANDVYSDNIGNKAVDLESEITSIIHQIGVPAHIKGYMYLREAITMVVNNMELLSAVTKELYPSIAKKYNTTASRVERAIRHAIEVAWSRGQVETINKLFGYTINNGKGKPTNSEFIAMIADKLRLKNKVS.

The Response regulatory domain occupies 7–125; the sequence is SVLIADDNKE…VFTNRIREMF (119 aa). D12, D13, and D58 together coordinate Ca(2+). A 4-aspartylphosphate modification is found at D58. Residues 213–232 constitute a DNA-binding region (H-T-H motif); it reads PSIAKKYNTTASRVERAIRH.

Requires Ca(2+) as cofactor.

The protein resides in the cytoplasm. May play the central regulatory role in sporulation. It may be an element of the effector pathway responsible for the activation of sporulation genes in response to nutritional stress. Spo0A may act in concert with spo0H (a sigma factor) to control the expression of some genes that are critical to the sporulation process. In Clostridium acetobutylicum (strain ATCC 824 / DSM 792 / JCM 1419 / IAM 19013 / LMG 5710 / NBRC 13948 / NRRL B-527 / VKM B-1787 / 2291 / W), this protein is Stage 0 sporulation protein A homolog (spo0A).